Consider the following 98-residue polypeptide: Large ribosomal subunit protein uL23 (98 aa).

The protein belongs to the universal ribosomal protein uL23 family. Part of the 50S ribosomal subunit. Contacts protein L29, and trigger factor when it is bound to the ribosome.

Functionally, one of the early assembly proteins it binds 23S rRNA. One of the proteins that surrounds the polypeptide exit tunnel on the outside of the ribosome. Forms the main docking site for trigger factor binding to the ribosome. The polypeptide is Large ribosomal subunit protein uL23 (Clostridium beijerinckii (strain ATCC 51743 / NCIMB 8052) (Clostridium acetobutylicum)).